A 396-amino-acid chain; its full sequence is Alanine racemase (396 aa).

The Proton acceptor; specific for D-alanine role is filled by K46. K46 is subject to N6-(pyridoxal phosphate)lysine. R145 is a substrate binding site. Y280 serves as the catalytic Proton acceptor; specific for L-alanine. M328 serves as a coordination point for substrate.

Belongs to the alanine racemase family. Pyridoxal 5'-phosphate serves as cofactor.

It carries out the reaction L-alanine = D-alanine. The protein operates within amino-acid biosynthesis; D-alanine biosynthesis; D-alanine from L-alanine: step 1/1. Catalyzes the interconversion of L-alanine and D-alanine. May also act on other amino acids. This chain is Alanine racemase (alr), found in Brucella abortus (strain 2308).